A 291-amino-acid chain; its full sequence is ATP synthase gamma chain (291 aa).

It belongs to the ATPase gamma chain family. F-type ATPases have 2 components, CF(1) - the catalytic core - and CF(0) - the membrane proton channel. CF(1) has five subunits: alpha(3), beta(3), gamma(1), delta(1), epsilon(1). CF(0) has three main subunits: a, b and c.

The protein localises to the cell inner membrane. Functionally, produces ATP from ADP in the presence of a proton gradient across the membrane. The gamma chain is believed to be important in regulating ATPase activity and the flow of protons through the CF(0) complex. This chain is ATP synthase gamma chain, found in Pelagibacter ubique (strain HTCC1062).